Reading from the N-terminus, the 286-residue chain is MDDFSATHINYTLSIHLSGIFFAWHRHFVWLWERTLREECGYNGYQPYWDWALSANNISASPIFDGSPTSLSGNGDPINQEPFLQLEPTNITIPTGTGGGCVTNGPFANMTLNLPDLSMAGDEEFPSNAFDYKPHCFTRNLNSHMSSAFTSQADVDRLLNSPSITDLQANIDFSAWPELREARILGPHAAAHMSLGRTMDDFWTAPQDPSFMLHHAQVDRIWSLWQARGPESRRWALNGTSTINNRPTSPEVTLDTELVWGSLSESKTMREVMSTEAYHFCYEYGA.

The Cu cation site is built by His16, His25, and His215.

Belongs to the tyrosinase family. Cu(2+) is required as a cofactor.

Its pathway is secondary metabolite biosynthesis. Functionally, oxidase; part of the gene cluster that mediates the biosynthesis of hancockiamides, an unusual new family of N-cinnamoylated piperazines. The NRPS hkm10 and the NmrA-like reductase hkm9 are proposed to convert two molecules of L-Phe to the intermediary piperazine called xenocockiamide A. Xenocockiamide A is then converted to hancockiamide D via a series of hydroxylations and O-methylations. The tyrosinase hkm6 may catalyze an aromatic hydroxylation, then the 2-oxoglutarate-dependent Fe(II) dioxygenase hkm4 and the FAD-dependent phenol hydroxylase hkm7 may catalyze consecutive hydroxylations to install 2 more hydroxy groups, and the methyltransferase hkm8 probably catalyzes two methylations using 2 molecules of S-adenosyl-L-methionine (SAM). The NRPS hkm11 activates and transfers trans-cinnamate supplied by the PAL hkm12 to hancockiamide D and produces hancockiamide A. NRPS Hkm11 has the flexibility to tolerate the bulky hancockiamide G as a substrate and the absence of the acetyl-transferase hkm3 opens up the opportunity for hkm11 to introduce a second N-cinnamoyl moiety. The cytochrome P450 monooxygenase hkm5 catalyzes the methylenedioxy bridge formation, converting hancockiamide A into hancockiamide G. Hkm5 can also convert hancockiamide B into hancockiamide C, and hancockiamide D into hancockiamide H. The N-acetyltransferase hkm3 finally transfers an acetyl group to 1-N of piperazine, converting hancockiamide A into hancockiamide B and hancockiamide G into hancockiamide C. The protein is Oxidase hkm6 of Aspergillus hancockii.